The primary structure comprises 1112 residues: DNA repair protein rad13 (1112 aa).

The segment at 1–95 is N-domain; the sequence is MGVSGLWDIL…QTIQKRQARR (95 aa). Asp30 and Asp77 together coordinate Mg(2+). In terms of domain architecture, UIM spans 395 to 414; sequence TDDLILQLATQQSLEENKKS. Residues 742–870 are I-domain; that stretch reads KRSEKRDADE…LALEILHEFP (129 aa). Mg(2+) contacts are provided by Glu777, Glu779, Asp798, Asp800, and Asp849. A disordered region spans residues 1056–1112; that stretch reads KMMASKNSSDSDSDSEDNFLASLTPKTNSSSISIENLPRKTKLSTSLLKKPSKRRRK. Residues 1079 to 1089 are compositionally biased toward polar residues; that stretch reads TPKTNSSSISI.

The protein belongs to the XPG/RAD2 endonuclease family. XPG subfamily. The cofactor is Mg(2+).

It is found in the nucleus. Its function is as follows. Single-stranded DNA endonuclease involved in excision repair of DNA damaged with UV light, bulky adducts, or cross-linking agents. Essential for the incision step of excision-repair. The sequence is that of DNA repair protein rad13 (rad13) from Schizosaccharomyces pombe (strain 972 / ATCC 24843) (Fission yeast).